We begin with the raw amino-acid sequence, 217 residues long: Growth factor receptor-bound protein 2 (217 aa).

The residue at position 1 (M1) is an N-acetylmethionine. The region spanning 1-58 is the SH3 1 domain; it reads MEAIAKYDFKATADDELSFKRGDILKVLNEECDQNWYKAELNGKDGFIPKNYIEMKPH. N6-acetyllysine occurs at positions 6, 50, and 109. The 93-residue stretch at 60-152 folds into the SH2 domain; sequence WFFGKIPRAK…NQQIFLRDIE (93 aa). Residue K109 forms a Glycyl lysine isopeptide (Lys-Gly) (interchain with G-Cter in ubiquitin) linkage. The region spanning 156–215 is the SH3 2 domain; the sequence is QQPTYVQALFDFDPQEDGELGFRRGDFIHVMDNSDPNWWKGACHGQTGMFPRNYVTPVNR. Y209 is subject to Phosphotyrosine. T211 is subject to Phosphothreonine.

This sequence belongs to the GRB2/sem-5/DRK family. Homodimer. Associates (via SH2 domain) with activated EGF and PDGF receptors (tyrosine phosphorylated). Interacts with PDGFRA (tyrosine phosphorylated); the interaction may be indirect. Also associates to other cellular Tyr-phosphorylated proteins such as SIT1, IRS1, IRS2, IRS4, SHC and LNK; probably via the concerted action of both its SH2 and SH3 domains. It also seems to interact with RAS in the signaling pathway leading to DNA synthesis. Interacts with SOS1. Forms a complex with MUC1 and SOS1, through interaction of the SH3 domains with SOS1 and the SH2 domain with phosphorylated MUC1. Interacts with phosphorylated MET. Interacts with phosphorylated TOM1L1. Interacts with the phosphorylated C-terminus of SH2B2. Interacts with phosphorylated SIT1, LAX1, LAT, LAT2 and LIME1 upon TCR and/or BCR activation. Interacts with NISCH, PTPNS1 and REPS2. Interacts with syntrophin SNTA1. Interacts (via SH3 domains) with REPS1. Interacts (via SH3 domains) with PIK3C2B. Interacts with CBL and CBLB. Interacts with AJUBA and CLNK. Interacts (via SH2 domain) with TEK/TIE2 (tyrosine phosphorylated). Interacts with SHB, INPP5D/SHIP1, SKAP1 and SKAP2. Interacts with PTPN11. Interacts with PRNP. Interacts with RALGPS1. Interacts with HCST. Interacts with KDR. Interacts with FLT1 (tyrosine-phosphorylated). Interacts with GAPT and PTPRE. Interacts (via SH2 domain) with KIF26A. Interacts (via SH3 2) with GAB2. Interacts with ADAM15. Interacts with THEMIS2. Interacts (via SH2 domain) with AXL (phosphorylated). Interacts (via SH2 domain) with KIT (phosphorylated). Interacts with PTPRJ and BCR. Interacts with PTPN23. Interacts with FLT4 (tyrosine phosphorylated). Interacts with EPHB1 and SHC1; activates the MAPK/ERK cascade to regulate cell migration. Part of a complex including TNK2, GRB2, LTK and one receptor tyrosine kinase (RTK) such as AXL and PDGFRL, in which GRB2 promotes RTK recruitment by TNK2. Interacts (via SH2 domain) with CSF1R (tyrosine phosphorylated). Interacts with ERBB4. Interacts with NTRK1 (phosphorylated upon ligand-binding). Interacts with PTK2/FAK1 (tyrosine phosphorylated). Interacts with PTK2B/PYK2 (tyrosine phosphorylated). Interacts (via SH3 domains) with GAREM1 isoform 1 (via proline-rich domain and tyrosine phosphorylated); the interaction occurs upon EGF stimulation. Interacts with DAB2. Interacts with TESPA1. Interacts with PLCG1, LAT and THEMIS upon TCR activation in thymocytes; the association is weaker in the absence of TESPA1. Interacts with CD28. Interacts with RAB13; may recruit RAB13 to the leading edge of migrating endothelial cells where it can activate RHOA. Interacts with ASAP3 (phosphorylated form). Interacts (via SH2 domain) with PTPRH (phosphorylated form). Interacts with PTPRO (phosphorylated form). Interacts with PTPRB (phosphorylated form). Interacts (via SH3 domain 2) with PRR14 (via proline-rich region). Interacts with FCRL6 (tyrosine phosphorylated form). Interacts with RHEX (via tyrosine-phosphorylated form). Interacts with DENND2B. Interacts with SPRY2. Interacts with LRRC8A. Interacts with PEAK1. Interacts with CD28. Interacts with FCRL1. Interacts with PCNA. Interacts with CD19. Interacts with BECN1. Interacts with RAD51; the interaction inhibits RAD51 ATPase to stabilize RAD51-DNA complex at stalled replication forks. Interacts with MRE11; this interaction recruits MRE11 to the DNA damage sites. Interacts with RIPK1 ans SQSTM1; these interactions play a critical role in regulating programmed necrosis. Interacts with AGO2; this interaction is important for the formation of a ternary complex containing GRB2, AGO2 and DICER1. Interacts with TIGIT; this interaction inhibits PI3K and MAPK signaling cascades. Interacts with CD226; this interaction leads to activation of VAV1, PI3K and PLCG1. In terms of assembly, interacts (via SH2-domain) with SCIMP; this interaction is dependent on phosphorylation of SCIMP 'Tyr-69'. As to quaternary structure, interacts with SOS1; this interaction competes with GRB2 to bind SOS1 via its N-terminal SH3 domain. (Microbial infection) Interacts (via SH3 domain) with hepatitis E virus/HEV ORF3 protein. In terms of assembly, (Microbial infection) Interacts with hepatitis C virus/HCV protein NS5A via its SH3 domains. As to quaternary structure, (Microbial infection) Interacts with herpes simplex virus 1 protein UL46. (Microbial infection) Interacts with B19 parvovirus protein 11K. Post-translationally, phosphorylation of Tyr-209 in the C-terminal SH3 domain reduces its binding to SOS1. In terms of processing, ubiquitinated by RNF173, leading to proteasomal degradation and inhibition of the RAF/MEK/ERK pathway. In the nucleus, polyubiquitinated by RBBP6 at Lys-109 at DNA damage sites.

Its subcellular location is the nucleus. The protein localises to the cytoplasm. It localises to the endosome. The protein resides in the golgi apparatus. Non-enzymatic adapter protein that plays a pivotal role in precisely regulated signaling cascades from cell surface receptors to cellular responses, including signaling transduction and gene expression. Thus, participates in many biological processes including regulation of innate and adaptive immunity, autophagy, DNA repair or necroptosis. Controls signaling complexes at the T-cell antigen receptor to facilitate the activation, differentiation, and function of T-cells. Mechanistically, engagement of the TCR leads to phosphorylation of the adapter protein LAT, which serves as docking site for GRB2. In turn, GRB2 establishes a a connection with SOS1 that acts as a guanine nucleotide exchange factor and serves as a critical regulator of KRAS/RAF1 leading to MAPKs translocation to the nucleus and activation. Functions also a role in B-cell activation by amplifying Ca(2+) mobilization and activation of the ERK MAP kinase pathway upon recruitment to the phosphorylated B-cell antigen receptor (BCR). Plays a role in switching between autophagy and programmed necrosis upstream of EGFR by interacting with components of necrosomes including RIPK1 and with autophagy regulators SQSTM1 and BECN1. Regulates miRNA biogenesis by forming a functional ternary complex with AGO2 and DICER1. Functions in the replication stress response by protecting DNA at stalled replication forks from MRE11-mediated degradation. Mechanistically, inhibits RAD51 ATPase activity to stabilize RAD51 on stalled replication forks. Additionally, directly recruits and later releases MRE11 at DNA damage sites during the homology-directed repair (HDR) process. Its function is as follows. Does not bind to phosphorylated epidermal growth factor receptor (EGFR) but inhibits EGF-induced transactivation of a RAS-responsive element. Acts as a dominant negative protein over GRB2 and by suppressing proliferative signals, may trigger active programmed cell death. Mechanistically, inhibits RAS-ERK signaling and downstream cell proliferation by competing with GRB2 for SOS1 binding and thus by regulating SOS1 membrane recruitment. The protein is Growth factor receptor-bound protein 2 (GRB2) of Homo sapiens (Human).